Here is a 683-residue protein sequence, read N- to C-terminus: MRWQRLAEEVREHQFRYYVRDAPIISDGEFDALLRELQELEDRHPDLRTPDSPTQLVGGGFATDFTPVDHLERMLSLDNVFDVDELRAWAARVEAETGPDLHYLCEVKIDGVALNLVYERGKLVRAATRGDGRTGEDVTLNARTIEDVPGELSAGGEFPVPELLEVRGEVYLRLADFEALNAAIVAEGKPPYANPRNTAAGSLRQKDPAVTARRRLRMICHGLGRIEGYTPASQFEAYRALSAWGLPVSEHTRRVRGIDAVIERVAYWGEHRHDIEHEIDGQVIKVDETSLQRRLGATSRAPRWAIAYKYPPEEATTKLRAIEVNVGRTGRVTPFAVMEPVVIAGSTVAMATLHNASEVKRKGVLIGDTVTIRKAGDVIPEVLGPVVDARTGAEREFVMPTHCPECGTELAPEKEGDADIRCPNQRSCPAQLRERVYHVAGRSAFDIEALGYEAAIDLLQSGAIGDEGDLFDLDEARLLTTSLFTNKNGSLSANGKRLLENLDAAKDRPLWRVLVGLSIRHVGPTAARALAAEFGSMERIEQASVDELAATDGVGPTIAAAVAEWFTVDWHRAIVAKWRAAGVRMVDERDESIERTLEGLSIVVTGSLQGFSRDGAKEAILARGGKAAGSVSKKTAFVVVGDAPGAKAAKAEELGVPILDEEGFVRLLAEGPAAVAAEEPESG.

NAD(+) is bound by residues 27–31 (DGEFD), 76–77 (SL), and E106. The active-site N6-AMP-lysine intermediate is the K108. NAD(+) is bound by residues R129, E169, K285, and K309. Residues C403, C406, C422, and C428 each contribute to the Zn(2+) site. Residues 592 to 681 (SIERTLEGLS…PAAVAAEEPE (90 aa)) form the BRCT domain.

Belongs to the NAD-dependent DNA ligase family. LigA subfamily. Mg(2+) serves as cofactor. The cofactor is Mn(2+).

The enzyme catalyses NAD(+) + (deoxyribonucleotide)n-3'-hydroxyl + 5'-phospho-(deoxyribonucleotide)m = (deoxyribonucleotide)n+m + AMP + beta-nicotinamide D-nucleotide.. In terms of biological role, DNA ligase that catalyzes the formation of phosphodiester linkages between 5'-phosphoryl and 3'-hydroxyl groups in double-stranded DNA using NAD as a coenzyme and as the energy source for the reaction. It is essential for DNA replication and repair of damaged DNA. The sequence is that of DNA ligase 2 from Nocardia farcinica (strain IFM 10152).